A 144-amino-acid polypeptide reads, in one-letter code: uncharacterized protein (144 aa).

Residues 125–135 (PQQQNNHQLQS) show a composition bias toward polar residues. The interval 125–144 (PQQQNNHQLQSKPKAASISR) is disordered.

This is an uncharacterized protein from Rickettsia prowazekii (strain Madrid E).